The following is a 227-amino-acid chain: Enolase-phosphatase E1 (227 aa).

The Mg(2+) site is built by aspartate 11 and glutamate 13. Substrate-binding positions include 118-119 (SS) and lysine 161. Residue aspartate 186 participates in Mg(2+) binding.

The protein belongs to the HAD-like hydrolase superfamily. MasA/MtnC family. In terms of assembly, monomer. Mg(2+) is required as a cofactor.

The protein resides in the cytoplasm. The protein localises to the nucleus. The catalysed reaction is 5-methylsulfanyl-2,3-dioxopentyl phosphate + H2O = 1,2-dihydroxy-5-(methylsulfanyl)pent-1-en-3-one + phosphate. The protein operates within amino-acid biosynthesis; L-methionine biosynthesis via salvage pathway; L-methionine from S-methyl-5-thio-alpha-D-ribose 1-phosphate: step 3/6. It functions in the pathway amino-acid biosynthesis; L-methionine biosynthesis via salvage pathway; L-methionine from S-methyl-5-thio-alpha-D-ribose 1-phosphate: step 4/6. Functionally, bifunctional enzyme that catalyzes the enolization of 2,3-diketo-5-methylthiopentyl-1-phosphate (DK-MTP-1-P) into the intermediate 2-hydroxy-3-keto-5-methylthiopentenyl-1-phosphate (HK-MTPenyl-1-P), which is then dephosphorylated to form the acireductone 1,2-dihydroxy-3-keto-5-methylthiopentene (DHK-MTPene). The sequence is that of Enolase-phosphatase E1 from Saccharomyces cerevisiae (strain ATCC 204508 / S288c) (Baker's yeast).